The sequence spans 300 residues: MAEITLEPSDLMAQTNKRIVPKFTEIFPVEDANYPYSAFIASVRKDVIKHCTDHKGIFQPVLPPEKKVPELWLYTELKTRTSSITLAIRMDNLYLVGFRTPGGVWWEFGKDGDTHLLGDNPRWLGFGGRYQDLIGNKGLETVTMGRAEMTRAVNDLAKKKKMATLEEEEVQMQMQMPEAADLAAAAAADPQADTKSKLVKLVVMVCEGLRFNTVSRTVDAGFNSQHGVTLTVTQGKQVQKWDRISKAAFEWADHPTAVIPDMQKLGIKDKNEAARIVALVKNQTTACATAASADNDDDEA.

E207 is an active-site residue.

This sequence belongs to the ribosome-inactivating protein family. Type 1 RIP subfamily. As to quaternary structure, monomer. As to expression, accumulates to high levels in seeds.

Its subcellular location is the cytoplasm. The enzyme catalyses Endohydrolysis of the N-glycosidic bond at one specific adenosine on the 28S rRNA.. Functionally, possesses features of some constitutive defense agent. The coordinate Opaque-2-controlled synthesis of this protein and the major seed storage proteins (zeins) may provide the germinating seedling with both nutritional benefits and protection against pathogen invasion of the surrounding endosperm. In Zea mays (Maize), this protein is Ribosome-inactivating protein 3 (CRIP3).